We begin with the raw amino-acid sequence, 107 residues long: MASGAARWLALVRVGSGASRSWLSLRKGGDVSAGRSCSGQSLVPTRSVIVTRSGAILPKPVKMSFGLLRVFSIVIPFLYVGTLISKNFAALLEEHDIFVPEDDDDDD.

Residues 1-47 (MASGAARWLALVRVGSGASRSWLSLRKGGDVSAGRSCSGQSLVPTRS) constitute a mitochondrion transit peptide. At 48–65 (VIVTRSGAILPKPVKMSF) the chain is on the mitochondrial matrix side. The helical transmembrane segment at 66 to 85 (GLLRVFSIVIPFLYVGTLIS) threads the bilayer. Positions 81–85 (GTLIS) match the GXXXX[G/A/S] motif. Residues 86-107 (KNFAALLEEHDIFVPEDDDDDD) are Mitochondrial intermembrane-facing.

The protein belongs to the SMDT1/EMRE family. In terms of assembly, component of the uniplex complex, composed of MCU, EMRE/SMDT1, MICU1 and MICU2 (or MICU3) in a 4:4:1:1 stoichiometry. The number of EMRE/SMDT1 molecules is hovewer variable, ranging from 1 to 4 copies per uniplex complex, leading to uniplex complexes with distinct gatekeeping profiles. Interacts (via its C-terminal poly-Asp tail) with MCUR1; the interaction is direct. Unprocessed form interacts (via transit peptide) with MAIP1. Post-translationally, undergoes proteolytic degradation in neurons: degraded by AFG3L2 and SPG7 before SMDT1/EMRE assembly with the uniporter complex, limiting the availability of SMDT1/EMRE for MCU assembly and promoting efficient assembly of gatekeeper subunits with MCU.

It is found in the mitochondrion inner membrane. Essential regulatory subunit of the mitochondrial calcium uniporter complex (uniplex), a complex that mediates calcium uptake into mitochondria. Required to bridge the calcium-sensing proteins MICU1 with the calcium-conducting subunit MCU. Acts by mediating activation of MCU and retention of MICU1 to the MCU pore, in order to ensure tight regulation of the uniplex complex and appropriate responses to intracellular calcium signaling. The sequence is that of Essential MCU regulator, mitochondrial from Bos taurus (Bovine).